The chain runs to 240 residues: Urease accessory protein UreF (240 aa).

This sequence belongs to the UreF family. As to quaternary structure, ureD, UreF and UreG form a complex that acts as a GTP-hydrolysis-dependent molecular chaperone, activating the urease apoprotein by helping to assemble the nickel containing metallocenter of UreC. The UreE protein probably delivers the nickel.

It localises to the cytoplasm. Its function is as follows. Required for maturation of urease via the functional incorporation of the urease nickel metallocenter. The protein is Urease accessory protein UreF of Bradyrhizobium sp. (strain BTAi1 / ATCC BAA-1182).